The following is an 88-amino-acid chain: Cell division topological specificity factor (88 aa).

The protein belongs to the MinE family.

Functionally, prevents the cell division inhibition by proteins MinC and MinD at internal division sites while permitting inhibition at polar sites. This ensures cell division at the proper site by restricting the formation of a division septum at the midpoint of the long axis of the cell. This is Cell division topological specificity factor from Aromatoleum aromaticum (strain DSM 19018 / LMG 30748 / EbN1) (Azoarcus sp. (strain EbN1)).